The sequence spans 95 residues: Large ribosomal subunit protein eL37y (95 aa).

Zn(2+) is bound by residues cysteine 19, cysteine 22, cysteine 34, and cysteine 37. Residues 19–37 (CVRCGRRSFHIQKSRCSAC) form a C4-type zinc finger.

It belongs to the eukaryotic ribosomal protein eL37 family. Zn(2+) serves as cofactor.

Its function is as follows. Binds to the 23S rRNA. The polypeptide is Large ribosomal subunit protein eL37y (RPL37B) (Arabidopsis thaliana (Mouse-ear cress)).